We begin with the raw amino-acid sequence, 133 residues long: Small ribosomal subunit protein uS8 (133 aa).

The protein belongs to the universal ribosomal protein uS8 family. As to quaternary structure, part of the 30S ribosomal subunit. Contacts proteins S5 and S12.

One of the primary rRNA binding proteins, it binds directly to 16S rRNA central domain where it helps coordinate assembly of the platform of the 30S subunit. In Synechococcus sp. (strain CC9605), this protein is Small ribosomal subunit protein uS8.